The chain runs to 301 residues: Amylovoran biosynthesis glycosyltransferase AmsB (301 aa).

This sequence belongs to the glycosyltransferase 2 family.

Its pathway is glycan metabolism; exopolysaccharide biosynthesis. Functionally, involved in the biosynthesis of amylovoran, which functions as a virulence factor. May function as a glycosyl transferase which transfers galactose from UDP-galactose to a lipid-linked amylovoran-subunit precursor. The polypeptide is Amylovoran biosynthesis glycosyltransferase AmsB (amsB) (Erwinia amylovora (Fire blight bacteria)).